The sequence spans 159 residues: Na(+)/H(+) antiporter subunit E1 (159 aa).

Helical transmembrane passes span 1–21, 27–47, 49–69, and 101–121; these read MAVQ…VTNS, FVLG…VLPG, FYVI…IELI, and WQIV…VLGV.

This sequence belongs to the CPA3 antiporters (TC 2.A.63) subunit E family. As to quaternary structure, may form a heterooligomeric complex that consists of seven subunits: mnhA1, mnhB1, mnhC1, mnhD1, mnhE1, mnhF1 and mnhG1.

The protein resides in the cell membrane. In terms of biological role, mnh complex is a Na(+)/H(+) antiporter involved in Na(+) excretion. This is Na(+)/H(+) antiporter subunit E1 (mnhE1) from Staphylococcus aureus (strain bovine RF122 / ET3-1).